A 332-amino-acid polypeptide reads, in one-letter code: Fructose-1,6-bisphosphatase class 1 (332 aa).

The Mg(2+) site is built by glutamate 89, aspartate 110, leucine 112, and aspartate 113. Substrate-binding positions include 113–116 (DGSS), asparagine 206, tyrosine 239, 257–259 (YLY), and lysine 269. Glutamate 275 provides a ligand contact to Mg(2+).

The protein belongs to the FBPase class 1 family. In terms of assembly, homotetramer. Mg(2+) serves as cofactor.

It localises to the cytoplasm. The catalysed reaction is beta-D-fructose 1,6-bisphosphate + H2O = beta-D-fructose 6-phosphate + phosphate. The protein operates within carbohydrate biosynthesis; gluconeogenesis. The polypeptide is Fructose-1,6-bisphosphatase class 1 (Klebsiella pneumoniae (strain 342)).